We begin with the raw amino-acid sequence, 87 residues long: Defensin-A (87 aa).

An N-terminal signal peptide occupies residues 1–19 (MKFYLVLAFLTLCAVAVTA). The propeptide occupies 20 to 44 (LPAGDETRIDLETLEEDLRLVDGAQ). 3 cysteine pairs are disulfide-bonded: Cys-57/Cys-78, Cys-64/Cys-83, and Cys-68/Cys-85.

In terms of tissue distribution, hemolymph and fat body.

The protein resides in the secreted. Its function is as follows. Antibacterial peptide mostly active against Gram-positive and Gram negative bacteria. This Glossina morsitans morsitans (Savannah tsetse fly) protein is Defensin-A.